The primary structure comprises 294 residues: Extracellular metalloprotease TRV_07111 (294 aa).

A signal peptide spans 1–19 (MRFSVVFAAIAALSSVVTA). 3 N-linked (GlcNAc...) asparagine glycosylation sites follow: asparagine 49, asparagine 54, and asparagine 74. Histidine 185 provides a ligand contact to Zn(2+). Glutamate 186 is an active-site residue. Histidine 189 provides a ligand contact to Zn(2+). Cysteine 224 and cysteine 250 form a disulfide bridge.

This sequence belongs to the peptidase M43B family.

It is found in the secreted. Functionally, secreted metalloproteinase that allows assimilation of proteinaceous substrates. Plays a pivotal role as a pathogenicity determinant during infections and contributes to the ability of the pathogen to persist within the mammalian host. In Trichophyton verrucosum (strain HKI 0517), this protein is Extracellular metalloprotease TRV_07111.